The chain runs to 90 residues: Probable Fe(2+)-trafficking protein (90 aa).

The protein belongs to the Fe(2+)-trafficking protein family.

Functionally, could be a mediator in iron transactions between iron acquisition and iron-requiring processes, such as synthesis and/or repair of Fe-S clusters in biosynthetic enzymes. In Ectopseudomonas mendocina (strain ymp) (Pseudomonas mendocina), this protein is Probable Fe(2+)-trafficking protein.